The sequence spans 212 residues: ATP-dependent dethiobiotin synthetase BioD (212 aa).

13 to 18 serves as a coordination point for ATP; sequence GIGKTV. A Mg(2+)-binding site is contributed by Thr17. Lys33 is a catalytic residue. Residue Ser37 participates in substrate binding. Glu100 contributes to the Mg(2+) binding site. ATP-binding positions include 100 to 103 and 184 to 186; these read EGAG and PLL.

This sequence belongs to the dethiobiotin synthetase family. As to quaternary structure, homodimer. Mg(2+) is required as a cofactor.

Its subcellular location is the cytoplasm. It catalyses the reaction (7R,8S)-7,8-diammoniononanoate + CO2 + ATP = (4R,5S)-dethiobiotin + ADP + phosphate + 3 H(+). It functions in the pathway cofactor biosynthesis; biotin biosynthesis; biotin from 7,8-diaminononanoate: step 1/2. In terms of biological role, catalyzes a mechanistically unusual reaction, the ATP-dependent insertion of CO2 between the N7 and N8 nitrogen atoms of 7,8-diaminopelargonic acid (DAPA, also called 7,8-diammoniononanoate) to form a ureido ring. This chain is ATP-dependent dethiobiotin synthetase BioD, found in Brucella melitensis biotype 2 (strain ATCC 23457).